A 319-amino-acid chain; its full sequence is CBBY-like protein (319 aa).

A chloroplast-targeting transit peptide spans 1-65 (MATVKISLSL…YRSSRSVGVT (65 aa)). The active-site Nucleophile is Asp82. Residues Asp82 and Asp84 each contribute to the Mg(2+) site. Substrate is bound at residue Asp82. Asp84 functions as the Proton donor in the catalytic mechanism. Substrate contacts are provided by residues Glu91, 125–129 (GGKER), 158–161 (HKQK), and 198–204 (STSNEKA). Asp258 lines the Mg(2+) pocket.

The protein belongs to the HAD-like hydrolase superfamily. DOG/GPP family. It depends on Mg(2+) as a cofactor.

It is found in the plastid. Its subcellular location is the chloroplast. The catalysed reaction is D-xylulose 1,5-bisphosphate + H2O = D-xylulose 5-phosphate + phosphate. Functionally, highly selective xylulose-1,5-bisphosphate (XuBP) phosphatase. Also shows activity towards ribulose-1,5-bisphosphate (RuBP) and fructose-1,6-bisphosphate (FBP), but not towards fructose-6-phosphate (F6P) or ribulose-5-phosphate (Ru5P). Degrades xylulose-1,5-bisphosphate, a potent inhibitor of rubisco produced by the rubisco itself. The chain is CBBY-like protein from Arabidopsis thaliana (Mouse-ear cress).